The sequence spans 503 residues: AMP phosphorylase (503 aa).

Residues Gly-168, 194–199 (SRAITS), and Thr-203 contribute to the AMP site. Asp-256 functions as the Proton donor in the catalytic mechanism. AMP-binding residues include Ser-264 and Lys-288.

It belongs to the thymidine/pyrimidine-nucleoside phosphorylase family. Type 2 subfamily.

It carries out the reaction AMP + phosphate = alpha-D-ribose 1,5-bisphosphate + adenine. It catalyses the reaction CMP + phosphate = cytosine + alpha-D-ribose 1,5-bisphosphate. The catalysed reaction is UMP + phosphate = alpha-D-ribose 1,5-bisphosphate + uracil. Its function is as follows. Catalyzes the conversion of AMP and phosphate to adenine and ribose 1,5-bisphosphate (R15P). Exhibits phosphorylase activity toward CMP and UMP in addition to AMP. Functions in an archaeal AMP degradation pathway, together with R15P isomerase and RubisCO. The chain is AMP phosphorylase (deoA) from Pyrococcus abyssi (strain GE5 / Orsay).